The sequence spans 347 residues: Eukaryotic translation initiation factor 3 subunit I (347 aa).

WD repeat units lie at residues 8–47 (GHERPLTQVKYNKEGDLLFSCSKDSSASVWYSLNGERLGT), 50–89 (GHTGTIWSIDVDCFTKYCVTGSADYSIKLWDVSNGQCVAT), 149–190 (THEG…EYVD), 194–233 (LHEKSISDMQFSPDLTYFITSSRDTNSFLVDVSTLQVLKK), and 291–330 (GHFGPLNTVAISPQGTSYASGGEDGFIRLHHFEKSYFDFK). Residue Ser-302 is modified to Phosphoserine.

This sequence belongs to the eIF-3 subunit I family. In terms of assembly, component of the eukaryotic translation initiation factor 3 (eIF-3) complex.

The protein resides in the cytoplasm. In terms of biological role, component of the eukaryotic translation initiation factor 3 (eIF-3) complex, which is involved in protein synthesis of a specialized repertoire of mRNAs and, together with other initiation factors, stimulates binding of mRNA and methionyl-tRNAi to the 40S ribosome. The eIF-3 complex specifically targets and initiates translation of a subset of mRNAs involved in cell proliferation. The protein is Eukaryotic translation initiation factor 3 subunit I of Saccharomyces cerevisiae (strain YJM789) (Baker's yeast).